The following is a 186-amino-acid chain: Riboflavin kinase (186 aa).

Residues threonine 42 and asparagine 44 each coordinate Mg(2+). Glutamate 123 (nucleophile) is an active-site residue.

The protein belongs to the flavokinase family. Zn(2+) is required as a cofactor. It depends on Mg(2+) as a cofactor.

It catalyses the reaction riboflavin + ATP = FMN + ADP + H(+). Its pathway is cofactor biosynthesis; FMN biosynthesis; FMN from riboflavin (ATP route): step 1/1. Catalyzes the phosphorylation of riboflavin (vitamin B2) to form flavin mononucleotide (FMN) coenzyme. The sequence is that of Riboflavin kinase (FMN1) from Eremothecium gossypii (strain ATCC 10895 / CBS 109.51 / FGSC 9923 / NRRL Y-1056) (Yeast).